Here is an 817-residue protein sequence, read N- to C-terminus: Protein-glutamine gamma-glutamyltransferase K (817 aa).

Disordered stretches follow at residues 1 to 38 (MMDG…SRRG) and 59 to 105 (DDWG…DGTI). Positions 1–100 (MMDGPRSDVG…VSRGSGVNAA (100 aa)) are membrane anchorage region. The span at 17-26 (LQPPTTPSPE) shows a compositional bias: pro residues. Thr22 carries the post-translational modification Phosphothreonine. Phosphoserine occurs at positions 24, 68, 82, 85, 92, and 95. The segment covering 71–84 (RGSSSGTRRPGSRG) has biased composition (low complexity). Residues Cys377, His436, and Asp459 contribute to the active site. Ca(2+)-binding residues include Asn499, Asp501, Glu548, and Glu553. The segment at 793–817 (GGFFSDAGGDSHLGETIPMASRGGA) is disordered.

This sequence belongs to the transglutaminase superfamily. Transglutaminase family. In terms of assembly, interacts with PLAAT4. Ca(2+) is required as a cofactor. In terms of processing, palmitoylated. The membrane anchorage region possesses a cluster of five cysteines within which fatty acid(s) may become thioester-linked. It is subject to phorbol ester-stimulated phosphorylation and is hypersensitive to proteolysis, which releases the enzyme in a soluble form. Post-translationally, tyrosine-phosphorylated.

The protein localises to the membrane. The enzyme catalyses L-glutaminyl-[protein] + L-lysyl-[protein] = [protein]-L-lysyl-N(6)-5-L-glutamyl-[protein] + NH4(+). Functionally, catalyzes the cross-linking of proteins and the conjugation of polyamines to proteins. Responsible for cross-linking epidermal proteins during formation of the stratum corneum. Involved in cell proliferation. The protein is Protein-glutamine gamma-glutamyltransferase K (TGM1) of Homo sapiens (Human).